The primary structure comprises 563 residues: Arginine--tRNA ligase (563 aa).

The short motif at Pro121–His131 is the 'HIGH' region element.

This sequence belongs to the class-I aminoacyl-tRNA synthetase family. In terms of assembly, monomer.

The protein localises to the cytoplasm. The catalysed reaction is tRNA(Arg) + L-arginine + ATP = L-arginyl-tRNA(Arg) + AMP + diphosphate. The protein is Arginine--tRNA ligase of Streptococcus pneumoniae (strain P1031).